Consider the following 276-residue polypeptide: Short-chain dehydrogenase/reductase ATR10 (276 aa).

I29, S51, D78, and N105 together coordinate NADP(+). The active-site Proton donor is S161. NADP(+) contacts are provided by K185 and T214. The active-site Lowers pKa of active site Tyr is K185.

This sequence belongs to the short-chain dehydrogenases/reductases (SDR) family.

The protein operates within mycotoxin biosynthesis. Its function is as follows. Short-chain dehydrogenase/reductase; part of the core atranone cluster (CAC) which products are predicted to catalyze most or all steps of mycotoxin atranone synthesis, starting from geranylgeranyl pyrophosphate (GGPP). The initial cyclization of GGPP to dolabellane is probably performed by the terpene cyclase ATR13. The Baeyer-Villiger oxidation near the end of the atranone synthesis, which converts atranones D and E to atranones F and G is predicted to be catalyzed by the monooxygenase ATR8. Of the CAC's other predicted gene products, the reducing PKS ATR6 might synthesize a polyketide chain. This polyketide is probably transferred onto the atranone backbone by the polyketide transferase ATR5. Other predicted CAC products include 4 oxygenases (ATR2, ATR3, ATR4, and ATR14), 3 short-chain reductases (ATR7, ATR9, and ATR10), and a methyltransferase (ATR12). These may all be involved in the various steps of atranone biosynthesis, although their specific roles must await experimental determination. The chain is Short-chain dehydrogenase/reductase ATR10 from Stachybotrys chlorohalonatus (strain IBT 40285).